The chain runs to 1381 residues: Hepatocyte growth factor receptor (1381 aa).

Residues Met-1–Gly-24 form the signal peptide. Residues Glu-25–Thr-932 lie on the Extracellular side of the membrane. Positions Lys-27–Leu-515 constitute a Sema domain. An N-linked (GlcNAc...) asparagine glycan is attached at Asn-45. 4 cysteine pairs are disulfide-bonded: Cys-95–Cys-101, Cys-98–Cys-160, Cys-133–Cys-141, and Cys-172–Cys-175. An N-linked (GlcNAc...) asparagine glycan is attached at Asn-106. An N-linked (GlcNAc...) asparagine glycan is attached at Asn-149. A glycan (N-linked (GlcNAc...) asparagine) is linked at Asn-202. Disulfide bonds link Cys-298-Cys-363 and Cys-385-Cys-397. Asn-399 and Asn-405 each carry an N-linked (GlcNAc...) asparagine glycan. Intrachain disulfides connect Cys-520–Cys-538, Cys-526–Cys-561, Cys-529–Cys-545, and Cys-541–Cys-551. IPT/TIG domains are found at residues Pro-563–Val-655, Pro-657–Arg-739, and Pro-742–Val-836. The O-linked (Man) threonine glycan is linked to Thr-582. 2 N-linked (GlcNAc...) asparagine glycosylation sites follow: Asn-607 and Asn-635. Residues Thr-676 and Thr-761 are each glycosylated (O-linked (Man) threonine). N-linked (GlcNAc...) asparagine glycosylation is found at Asn-785, Asn-879, and Asn-930. Residues Gly-933–Leu-955 traverse the membrane as a helical segment. Over Lys-956–Thr-1381 the chain is Cytoplasmic. Ser-966 is subject to Phosphoserine. Thr-977 carries the phosphothreonine modification. A phosphoserine mark is found at Ser-990, Ser-997, and Ser-1000. Tyr-1003 bears the Phosphotyrosine mark. Positions Val-1078–Ile-1345 constitute a Protein kinase domain. Residues Ile-1084–Val-1092 and Lys-1110 contribute to the ATP site. Asp-1204 functions as the Proton acceptor in the catalytic mechanism. An interaction with RANBP9 region spans residues Leu-1212–Thr-1381. Tyr-1230 carries the post-translational modification Phosphotyrosine. Residues Tyr-1234 and Tyr-1235 each carry the phosphotyrosine; by autocatalysis modification. Position 1289 is a phosphothreonine (Thr-1289). Residues Trp-1320 to Val-1359 are interaction with MUC20. A phosphotyrosine; by autocatalysis mark is found at Tyr-1349 and Tyr-1356. The residue at position 1365 (Tyr-1365) is a Phosphotyrosine.

It belongs to the protein kinase superfamily. Tyr protein kinase family. As to quaternary structure, heterodimer made of an alpha chain (50 kDa) and a beta chain (145 kDa) which are disulfide linked. Binds PLXNB1. Interacts when phosphorylated with downstream effectors including STAT3, PIK3R1, SRC, PCLG1, GRB2 and GAB1. Interacts with SPSB1, SPSB2 and SPSB4. Interacts with INPP5D/SHIP1. When phosphorylated at Tyr-1356, interacts with INPPL1/SHIP2. Interacts with RANBP9 and RANBP10, as well as SPSB1, SPSB2, SPSB3 and SPSB4. SPSB1 binding occurs in the presence and in the absence of HGF, however HGF treatment has a positive effect on this interaction. Interacts with MUC20; prevents interaction with GRB2 and suppresses hepatocyte growth factor-induced cell proliferation. Interacts with GRB10. Interacts with PTPN1 and PTPN2. Interacts with HSP90AA1 and HSP90AB1; the interaction suppresses MET kinase activity. Interacts with tensin TNS3. Interacts (when phosphorylated) with tensin TNS4 (via SH2 domain); the interaction increases MET protein stability by inhibiting MET endocytosis and subsequent lysosomal degradation. (Microbial infection) Immunoprecipitates with L.monocytogenes InlB. InlB probably dimerizes upon binding to MET, which encourages subsequent dimerization of MET. In terms of processing, autophosphorylated in response to ligand binding on Tyr-1234 and Tyr-1235 in the kinase domain leading to further phosphorylation of Tyr-1349 and Tyr-1356 in the C-terminal multifunctional docking site. Dephosphorylated by PTPRJ at Tyr-1349 and Tyr-1365. Dephosphorylated by PTPN1 and PTPN2. Ubiquitinated. Ubiquitination by CBL regulates the receptor stability and activity through proteasomal degradation. Post-translationally, O-mannosylation of IPT/TIG domains by TMEM260 is required for protein maturation. O-mannosylated residues are composed of single mannose glycans that are not elongated or modified. In terms of processing, (Microbial infection) Tyrosine phosphorylation is stimulated by L.monocytogenes InlB.

The protein resides in the membrane. The enzyme catalyses L-tyrosyl-[protein] + ATP = O-phospho-L-tyrosyl-[protein] + ADP + H(+). Its activity is regulated as follows. In its inactive state, the C-terminal tail interacts with the catalytic domain and inhibits the kinase activity. Upon ligand binding, the C-terminal tail is displaced and becomes phosphorylated, thus increasing the kinase activity. In terms of biological role, receptor tyrosine kinase that transduces signals from the extracellular matrix into the cytoplasm by binding to hepatocyte growth factor/HGF ligand. Regulates many physiological processes including proliferation, scattering, morphogenesis and survival. Ligand binding at the cell surface induces autophosphorylation of MET on its intracellular domain that provides docking sites for downstream signaling molecules. Following activation by ligand, interacts with the PI3-kinase subunit PIK3R1, PLCG1, SRC, GRB2, STAT3 or the adapter GAB1. Recruitment of these downstream effectors by MET leads to the activation of several signaling cascades including the RAS-ERK, PI3 kinase-AKT, or PLCgamma-PKC. The RAS-ERK activation is associated with the morphogenetic effects while PI3K/AKT coordinates prosurvival effects. During embryonic development, MET signaling plays a role in gastrulation, development and migration of muscles and neuronal precursors, angiogenesis and kidney formation. In adults, participates in wound healing as well as organ regeneration and tissue remodeling. Also promotes differentiation and proliferation of hematopoietic cells. (Microbial infection) Acts as a receptor for Listeria monocytogenes internalin InlB, mediating entry of the pathogen into cells. In Chlorocebus aethiops (Green monkey), this protein is Hepatocyte growth factor receptor (MET).